The sequence spans 458 residues: DNA repair protein RadA (458 aa).

A C4-type zinc finger spans residues Cys-11 to Cys-28. Gly-100–Ser-107 provides a ligand contact to ATP. Residues Lys-256–Gly-260 carry the RadA KNRFG motif motif. Residues Asp-355–Leu-458 form a lon-protease-like region.

It belongs to the RecA family. RadA subfamily.

In terms of biological role, DNA-dependent ATPase involved in processing of recombination intermediates, plays a role in repairing DNA breaks. Stimulates the branch migration of RecA-mediated strand transfer reactions, allowing the 3' invading strand to extend heteroduplex DNA faster. Binds ssDNA in the presence of ADP but not other nucleotides, has ATPase activity that is stimulated by ssDNA and various branched DNA structures, but inhibited by SSB. Does not have RecA's homology-searching function. This Haemophilus influenzae (strain ATCC 51907 / DSM 11121 / KW20 / Rd) protein is DNA repair protein RadA.